The chain runs to 523 residues: UDP-glucuronosyltransferase 3A2 (523 aa).

The signal sequence occupies residues Met-1–Ala-22. At Ala-23–Asp-487 the chain is on the extracellular side. N-linked (GlcNAc...) asparagine glycosylation is present at Asn-52. A helical transmembrane segment spans residues Val-488–Val-508. The Cytoplasmic segment spans residues Ala-509–Ala-523.

It belongs to the UDP-glycosyltransferase family. As to expression, highly expressed in kidney, while it is expressed at low levels in liver. Not detected in other tissues examined.

It is found in the membrane. It catalyses the reaction glucuronate acceptor + UDP-alpha-D-glucuronate = acceptor beta-D-glucuronoside + UDP + H(+). In terms of biological role, UDP-glucuronosyltransferases catalyze phase II biotransformation reactions in which lipophilic substrates are conjugated with glucuronic acid to increase water solubility and enhance excretion. They are of major importance in the conjugation and subsequent elimination of potentially toxic xenobiotics and endogenous compounds. The protein is UDP-glucuronosyltransferase 3A2 (Ugt3a2) of Mus musculus (Mouse).